Consider the following 802-residue polypeptide: Bifunctional purine biosynthetic protein ADE5,7 (802 aa).

The segment at 1–444 (MPEITAFPQP…FRRDIAYRAL (444 aa)) is GARS. Residues 126–339 (KEFMARHNIP…LAEVLLACVE (214 aa)) enclose the ATP-grasp domain. 157–218 (KPFTSGRSVI…EEYLSGPEIS (62 aa)) contacts ATP. Residues Glu-307 and Asn-309 each coordinate Mg(2+). Residues 455 to 788 (LTYAAAGVSV…EAWVIGEVQE (334 aa)) are AIRS.

It in the N-terminal section; belongs to the GARS family. The protein in the C-terminal section; belongs to the AIR synthase family. As to quaternary structure, homodimer. The cofactor is Mg(2+). Mn(2+) serves as cofactor.

Its subcellular location is the cytoplasm. It is found in the cytosol. The enzyme catalyses 2-formamido-N(1)-(5-O-phospho-beta-D-ribosyl)acetamidine + ATP = 5-amino-1-(5-phospho-beta-D-ribosyl)imidazole + ADP + phosphate + H(+). It carries out the reaction 5-phospho-beta-D-ribosylamine + glycine + ATP = N(1)-(5-phospho-beta-D-ribosyl)glycinamide + ADP + phosphate + H(+). Its pathway is purine metabolism; IMP biosynthesis via de novo pathway; 5-amino-1-(5-phospho-D-ribosyl)imidazole from N(2)-formyl-N(1)-(5-phospho-D-ribosyl)glycinamide: step 2/2. The protein operates within purine metabolism; IMP biosynthesis via de novo pathway; N(1)-(5-phospho-D-ribosyl)glycinamide from 5-phospho-alpha-D-ribose 1-diphosphate: step 2/2. Its function is as follows. Catalyzes the second and fifth step in the 'de novo' purine biosynthesis pathway; contains phosphoribosylamine--glycine ligase (GARS) and phosphoribosylformylglycinamidine cyclo-ligase (AIRS) activities. The polypeptide is Bifunctional purine biosynthetic protein ADE5,7 (Cryptococcus neoformans var. grubii serotype A (strain H99 / ATCC 208821 / CBS 10515 / FGSC 9487) (Filobasidiella neoformans var. grubii)).